Consider the following 432-residue polypeptide: Gamma-glutamyl phosphate reductase (432 aa).

This sequence belongs to the gamma-glutamyl phosphate reductase family.

It localises to the cytoplasm. The catalysed reaction is L-glutamate 5-semialdehyde + phosphate + NADP(+) = L-glutamyl 5-phosphate + NADPH + H(+). It participates in amino-acid biosynthesis; L-proline biosynthesis; L-glutamate 5-semialdehyde from L-glutamate: step 2/2. Catalyzes the NADPH-dependent reduction of L-glutamate 5-phosphate into L-glutamate 5-semialdehyde and phosphate. The product spontaneously undergoes cyclization to form 1-pyrroline-5-carboxylate. This is Gamma-glutamyl phosphate reductase from Corynebacterium glutamicum (strain R).